A 131-amino-acid chain; its full sequence is Large ribosomal subunit protein bL17 (131 aa).

It belongs to the bacterial ribosomal protein bL17 family. Part of the 50S ribosomal subunit. Contacts protein L32.

This is Large ribosomal subunit protein bL17 from Polynucleobacter necessarius subsp. necessarius (strain STIR1).